The sequence spans 197 residues: Small ribosomal subunit protein uS4c (197 aa).

In terms of domain architecture, S4 RNA-binding spans 84 to 143 (MRLDNIIFQLGMASTIPAARQLVCHRHILVNHRVVDIPSYRCKPRDIISIRNRPTSANAL).

This sequence belongs to the universal ribosomal protein uS4 family. In terms of assembly, part of the 30S ribosomal subunit. Contacts protein S5. The interaction surface between S4 and S5 is involved in control of translational fidelity.

Its subcellular location is the plastid. It is found in the chloroplast. Its function is as follows. One of the primary rRNA binding proteins, it binds directly to 16S rRNA where it nucleates assembly of the body of the 30S subunit. In terms of biological role, with S5 and S12 plays an important role in translational accuracy. The polypeptide is Small ribosomal subunit protein uS4c (rps4) (Adiantum capillus-veneris (Maidenhair fern)).